Reading from the N-terminus, the 62-residue chain is MSSVCDVCGKGPGFGMSVSHSHRRTRRRWNPNIQTVRTVVGGTPKRLNVCASCIKAGKVSRA.

It belongs to the bacterial ribosomal protein bL28 family.

The polypeptide is Large ribosomal subunit protein bL28 (Frankia casuarinae (strain DSM 45818 / CECT 9043 / HFP020203 / CcI3)).